A 722-amino-acid polypeptide reads, in one-letter code: D-galactosyl-beta-1-&gt;4-L-rhamnose phosphorylase (722 aa).

Asp-319 acts as the Proton donor in catalysis.

The protein belongs to the glycoside hydrolase 112 family.

It catalyses the reaction beta-D-galactosyl-(1-&gt;4)-L-rhamnose + phosphate = alpha-D-galactose 1-phosphate + L-rhamnopyranose. Its function is as follows. Reversibly phosphorolyzes beta-D-galactosyl-(1-&gt;4)-L-rhamnose to form alpha-D-galactose 1-phosphate and L-rhamnose. Does not phosphorolyze galacto-N-biose or lacto-N-biose. In the reverse reaction, has the highest activity toward L-rhamnose, also has activity toward L-mannose, and low activity toward L-lyxose, D-glucose, 2-deoxy-D-glucose and D-galactose. This Lachnoclostridium phytofermentans (strain ATCC 700394 / DSM 18823 / ISDg) (Clostridium phytofermentans) protein is D-galactosyl-beta-1-&gt;4-L-rhamnose phosphorylase.